Reading from the N-terminus, the 468-residue chain is Zinc finger protein mex-5 (468 aa).

A compositionally biased stretch (low complexity) spans 1 to 19 (MKAASNSVSSAGGSVSPTT). Residues 1–32 (MKAASNSVSSAGGSVSPTTTQPPLPPGQSSHP) are disordered. Position 186 is a phosphothreonine; by mbk-2 (T186). A compositionally biased stretch (basic and acidic residues) spans 243–254 (NHFHEHRGEKFG). The interval 243 to 269 (NHFHEHRGEKFGRRGFPIPETDSQQPP) is disordered. C3H1-type zinc fingers lie at residues 270–299 (NYKT…HGLK) and 314–344 (KYKT…HPTD). Residues 414–468 (DLQAGGDYNQPESNEDDLPPHLRRNRRENPPMNKRRTSLSTKWTSEENLGLRGHY) are disordered. The segment covering 451 to 460 (SLSTKWTSEE) has biased composition (polar residues). The residue at position 458 (S458) is a Phosphoserine.

In terms of assembly, interacts (when phosphorylated on Thr-186) with plk-1 (via POLO box domain) and plk-2 (via POLO box domain). Post-translationally, phosphorylation on Ser-458 by par-1 promotes localization of the protein to the anterior cytoplasm of the zygote. Phosphorylation by mbk-1 appears to be required for subsequent phosphorylation by plk-1. Asymmetrically localized to the anterior of the zygote before mitotic division, then differentially distributed to the somatic blastomere precursor cells.

It is found in the cytoplasm. Functionally, functions with mex-6 to affect embryonic viability, establish soma germline asymmetry in embryos and establish plk-1, pie-1, mex-1, and pos-1 asymmetry in embryos. Also affects formation of intestinal cells. Binds to mRNA in vitro, and inhibits pgl-3-mediated P-granule formation, probably by competing with pgl-3 for binding to mRNA. Required for neg-1 expression in anterior blastomeres during embryogenesis. The protein is Zinc finger protein mex-5 of Caenorhabditis elegans.